Reading from the N-terminus, the 505-residue chain is Folate transporter 1 (505 aa).

4 consecutive transmembrane segments (helical) span residues 58–78 (SLIA…IYLL), 89–109 (LSIV…WAVI), 122–142 (YYLL…GLIT), and 146–166 (LFIT…CNVI). N-linked (GlcNAc...) asparagine glycans are attached at residues Asn-177, Asn-181, and Asn-186. The next 2 helical transmembrane spans lie at 192–212 (AFRK…LLLI) and 216–236 (HIFL…FFII). An N-linked (GlcNAc...) asparagine glycan is attached at Asn-240. The next 5 membrane-spanning stretches (helical) occupy residues 266 to 286 (IIFI…FFYI), 300 to 320 (MAMF…LFFT), 326 to 346 (KLLL…LVVI), 352 to 372 (FLFI…EFIA), and 405 to 425 (FASI…NITS). N-linked (GlcNAc...) asparagine glycosylation occurs at Asn-427. Residues 431 to 451 (LPYMIIICCLTNIIPIFFLYI) form a helical membrane-spanning segment. An N-linked (GlcNAc...) asparagine glycan is attached at Asn-454.

Belongs to the major facilitator superfamily. Folate-biopterin transporter (TC 2.A.71) family.

The protein resides in the cell membrane. It catalyses the reaction folate(in) + H(+)(in) = folate(out) + H(+)(out). Its activity is regulated as follows. Transport of folates is inhibited by probenecid and methotrexate. Folate transporter with broad substrate specificity. Transports folic acid, folinic acid, pteroic acid, dihydropteroic acid, the folate precursor p-amino benzoic acid (pABA) and the human folate catabolite pABA monoglutamate. The polypeptide is Folate transporter 1 (Plasmodium falciparum (isolate 3D7)).